A 67-amino-acid chain; its full sequence is Stomoxyn (67 aa).

The signal sequence occupies residues 1 to 24 (MNFYKYLVVLVVLVLCLSATQTEA). Threonine amide is present on Thr66.

In terms of tissue distribution, constitutively expressed in the adult anterior midgut; proventriculus, thoracic and reservoir regions.

It is found in the secreted. Has antimicrobial activity against most Gram-positive and Gram-negative bacteria, filamentous fungi and yeasts tested. Has trypanolytic effect on T.b.rhodesiense and limited hemolytic activity against bovine red blood cells. In terms of biological role, may play an important role in protecting the stored blood in the anterior midgut from microorganisms prior to digestion. Adopts an amphipathic alpha-helical structure only in the presence of an organic solvent that mimics a phospholipid membrane. The protein is Stomoxyn of Stomoxys calcitrans (Stable fly).